The primary structure comprises 340 residues: Protein jhp_1168 (340 aa).

As to quaternary structure, seems to interact with H.pylori HolB.

In terms of biological role, could be the functional equivalent of DNA polymerase III delta subunit (HolA). The sequence is that of Protein jhp_1168 from Helicobacter pylori (strain J99 / ATCC 700824) (Campylobacter pylori J99).